A 206-amino-acid polypeptide reads, in one-letter code: MATAWCLPWTLRRAGAWLLTPPLRCPRRALHKQADGTEFQSIYSLDKLYPESRGSDTAWKVPDDAQQTNKDIPLDRLTISYCRSSGPGGQNVNKVNSKAEVRFHLATAEWIAEPVRQKMAIMHKNKINRSGELILTSECSRYQFRNLADCLQKIRDMIAEASQTPKEPSKEDAALHRIRIENMNRERLRKKRIHSAIKTGRRVDMD.

The N-terminal 29 residues, 1-29, are a transit peptide targeting the mitochondrion; sequence MATAWCLPWTLRRAGAWLLTPPLRCPRRA.

It belongs to the prokaryotic/mitochondrial release factor family. Mitochondrion-specific ribosomal protein mL62 subfamily. In terms of assembly, component of the mitochondrial 39S ribosomal subunit.

It is found in the mitochondrion. The enzyme catalyses an N-acyl-L-alpha-aminoacyl-tRNA + H2O = an N-acyl-L-amino acid + a tRNA + H(+). In terms of biological role, essential peptidyl-tRNA hydrolase component of the mitochondrial large ribosomal subunit. Acts as a codon-independent translation release factor that has lost all stop codon specificity and directs the termination of translation in mitochondrion, possibly in case of abortive elongation. May be involved in the hydrolysis of peptidyl-tRNAs that have been prematurely terminated and thus in the recycling of stalled mitochondrial ribosomes. The protein is Large ribosomal subunit protein mL62 of Ailuropoda melanoleuca (Giant panda).